A 412-amino-acid chain; its full sequence is Putative competence-damage inducible protein (412 aa).

Belongs to the CinA family.

The chain is Putative competence-damage inducible protein from Bacillus cytotoxicus (strain DSM 22905 / CIP 110041 / 391-98 / NVH 391-98).